Consider the following 90-residue polypeptide: Putative antitoxin VapB8 (90 aa).

Residues Met-1–Leu-56 form a disordered region. Positions Gly-26–Asp-36 are enriched in gly residues.

Its function is as follows. Antitoxin component of a possible type II toxin-antitoxin (TA) system. The cognate toxin is VapC8. The chain is Putative antitoxin VapB8 (vapB8) from Mycobacterium tuberculosis (strain ATCC 25618 / H37Rv).